We begin with the raw amino-acid sequence, 297 residues long: Tyrosine recombinase XerD (297 aa).

The 86-residue stretch at 1–86 folds into the Core-binding (CB) domain; sequence MKDSALIELF…AMRKLFQYLY (86 aa). The region spanning 107-291 is the Tyr recombinase domain; the sequence is RLPKYLTEQQ…AKERLKHLHE (185 aa). Active-site residues include Arg147, Lys171, His243, Arg246, and His269. Catalysis depends on Tyr278, which acts as the O-(3'-phospho-DNA)-tyrosine intermediate.

It belongs to the 'phage' integrase family. XerD subfamily. In terms of assembly, forms a cyclic heterotetrameric complex composed of two molecules of XerC and two molecules of XerD.

It is found in the cytoplasm. Site-specific tyrosine recombinase, which acts by catalyzing the cutting and rejoining of the recombining DNA molecules. The XerC-XerD complex is essential to convert dimers of the bacterial chromosome into monomers to permit their segregation at cell division. It also contributes to the segregational stability of plasmids. The chain is Tyrosine recombinase XerD from Pasteurella multocida (strain Pm70).